Reading from the N-terminus, the 690-residue chain is Ras guanyl-releasing protein 3 (690 aa).

The N-terminal Ras-GEF domain occupies 3–125 (SSGLGKAATL…SLIDISSIPS (123 aa)). The Ras-GEF domain occupies 152–383 (EPIELAEHLT…YKLSLVLEPR (232 aa)). 2 consecutive EF-hand domains span residues 420–455 (HIRK…FPFL) and 458–484 (FCVL…AKSQ). Residues aspartate 433, aspartate 435, aspartate 437, tyrosine 439, aspartate 444, aspartate 462, aspartate 464, aspartate 466, and glutamate 473 each coordinate Ca(2+). The Phorbol-ester/DAG-type zinc finger occupies 494-544 (IHNFQEMTYLKPTFCEHCAGFLWGIIKQGYKCKDCGANCHKQCKDLLVLAC). The disordered stretch occupies residues 667-690 (VDRGTEFELDQDEGEETRQDGEDG).

It belongs to the RASGRP family.

In terms of biological role, guanine nucleotide exchange factor (GEF) for Ras and Rap1. The protein is Ras guanyl-releasing protein 3 (RASGRP3) of Homo sapiens (Human).